The primary structure comprises 420 residues: Tol-Pal system protein TolB (420 aa).

The N-terminal stretch at 1–21 is a signal peptide; that stretch reads MKLFVHLVLFISLFIPYFTKA.

It belongs to the TolB family. In terms of assembly, the Tol-Pal system is composed of five core proteins: the inner membrane proteins TolA, TolQ and TolR, the periplasmic protein TolB and the outer membrane protein Pal. They form a network linking the inner and outer membranes and the peptidoglycan layer.

The protein localises to the periplasm. Functionally, part of the Tol-Pal system, which plays a role in outer membrane invagination during cell division and is important for maintaining outer membrane integrity. In Wolbachia pipientis wMel, this protein is Tol-Pal system protein TolB.